The sequence spans 153 residues: Mitochondrial fission 1 protein (153 aa).

Topologically, residues 1–127 (MFGKSTYPAL…SIHEKVTQEG (127 aa)) are cytoplasmic. The stretch at 76–109 (RECLYYLALGSYKIGDYSNATRYADTLLKNEPEN) is one TPR repeat. Residues 128 to 148 (LIGIGIAGGALAVGVGILGAL) form a helical membrane-spanning segment. The Mitochondrial intermembrane portion of the chain corresponds to 149-153 (LRKKR).

The protein belongs to the FIS1 family.

It is found in the mitochondrion outer membrane. Its function is as follows. Has a role in mitochondrial fission. Has a role in outer membrane fission but not matrix separation. The polypeptide is Mitochondrial fission 1 protein (FIS1) (Debaryomyces hansenii (strain ATCC 36239 / CBS 767 / BCRC 21394 / JCM 1990 / NBRC 0083 / IGC 2968) (Yeast)).